A 461-amino-acid polypeptide reads, in one-letter code: Ribosomal protein uS12 methylthiotransferase RimO (461 aa).

Residues 13–128 (PKVGFVSLGC…VMQHVHMHLP (116 aa)) enclose the MTTase N-terminal domain. Residues cysteine 22, cysteine 58, cysteine 87, cysteine 159, cysteine 163, and cysteine 166 each coordinate [4Fe-4S] cluster. The 246-residue stretch at 145–390 (LTPRHYAYLK…MEVAEEVSAK (246 aa)) folds into the Radical SAM core domain. The 69-residue stretch at 393-461 (AKKVGKTLKV…ADGHDLWGEV (69 aa)) folds into the TRAM domain.

This sequence belongs to the methylthiotransferase family. RimO subfamily. [4Fe-4S] cluster serves as cofactor.

It localises to the cytoplasm. It catalyses the reaction L-aspartate(89)-[ribosomal protein uS12]-hydrogen + (sulfur carrier)-SH + AH2 + 2 S-adenosyl-L-methionine = 3-methylsulfanyl-L-aspartate(89)-[ribosomal protein uS12]-hydrogen + (sulfur carrier)-H + 5'-deoxyadenosine + L-methionine + A + S-adenosyl-L-homocysteine + 2 H(+). Functionally, catalyzes the methylthiolation of an aspartic acid residue of ribosomal protein uS12. In Paraburkholderia xenovorans (strain LB400), this protein is Ribosomal protein uS12 methylthiotransferase RimO.